The following is a 225-amino-acid chain: CRISPR pre-crRNA endoribonuclease Cas5d (225 aa).

It belongs to the CRISPR-associated protein Cas5 family. Subtype I-C/Dvulg subfamily. Does not require a metal cofactor. serves as cofactor.

Its function is as follows. CRISPR (clustered regularly interspaced short palindromic repeat) is an adaptive immune system that provides protection against mobile genetic elements (viruses, transposable elements and conjugative plasmids). CRISPR clusters contain spacers, sequences complementary to antecedent mobile elements, and target invading nucleic acids. CRISPR clusters are transcribed and processed into CRISPR RNA (crRNA). This protein is a sequence-specific endonuclease that cleaves pre-crRNA at G21 into mature crRNA. Does not cleave pre-crRNA associated with the T.thermophilus strain HB27 Cas5 protein (AC Q746C2) CRISPR locus. The reaction mechanism may proceed by an intramolecular attack of the 2'-hydroxyl group of G21 on the scissile phosphodiester, cutting the precursor 3' to G21 residue yielding 5'-hydroxyl and 2' and/or 3' ends lacking a hydroxyl group (perhaps a 2'/3' cyclic phosphodiester). In Mannheimia succiniciproducens (strain KCTC 0769BP / MBEL55E), this protein is CRISPR pre-crRNA endoribonuclease Cas5d.